The primary structure comprises 433 residues: GTPase Obg (433 aa).

In terms of domain architecture, Obg spans 1-159; it reads MKFVDSADLI…FEIRAELKVL (159 aa). One can recognise an OBG-type G domain in the interval 160 to 332; it reads ADVGFVGLPN…LLFMIYEELK (173 aa). Residues 166 to 173, 191 to 195, 213 to 216, 284 to 287, and 313 to 315 each bind GTP; these read GLPNAGKS, FTTIN, DLPG, NKMD, and SGL. Residues Ser173 and Thr193 each coordinate Mg(2+). The OCT domain occupies 355–433; sequence KFEEQKEDIQ…VFDYELEWTD (79 aa).

The protein belongs to the TRAFAC class OBG-HflX-like GTPase superfamily. OBG GTPase family. As to quaternary structure, monomer. Requires Mg(2+) as cofactor.

The protein localises to the cytoplasm. An essential GTPase which binds GTP, GDP and possibly (p)ppGpp with moderate affinity, with high nucleotide exchange rates and a fairly low GTP hydrolysis rate. Plays a role in control of the cell cycle, stress response, ribosome biogenesis and in those bacteria that undergo differentiation, in morphogenesis control. This Mycoplasma capricolum subsp. capricolum (strain California kid / ATCC 27343 / NCTC 10154) protein is GTPase Obg.